Here is a 199-residue protein sequence, read N- to C-terminus: Gene 66 protein (199 aa).

The chain is Gene 66 protein (66) from Mycobacterium (Mycobacteriophage D29).